Reading from the N-terminus, the 123-residue chain is Class I hydrophobin pri2 (123 aa).

A signal peptide spans 1-18; the sequence is MVAIKSLAILALPVMAMA. 4 disulfides stabilise this stretch: Cys-31/Cys-102, Cys-38/Cys-96, Cys-39/Cys-84, and Cys-103/Cys-116. Asn-33 and Asn-40 each carry an N-linked (GlcNAc...) asparagine glycan.

It belongs to the fungal hydrophobin family. In terms of assembly, self-assembles to form functional amyloid fibrils called rodlets. Self-assembly into fibrillar rodlets occurs spontaneously at hydrophobic:hydrophilic interfaces and the rodlets further associate laterally to form amphipathic monolayers.

It is found in the secreted. The protein localises to the cell wall. Aerial growth, conidiation, and dispersal of filamentous fungi in the environment rely upon a capability of their secreting small amphipathic proteins called hydrophobins (HPBs) with low sequence identity. Class I can self-assemble into an outermost layer of rodlet bundles on aerial cell surfaces, conferring cellular hydrophobicity that supports fungal growth, development and dispersal; whereas Class II form highly ordered films at water-air interfaces through intermolecular interactions but contribute nothing to the rodlet structure. This chain is Class I hydrophobin pri2, found in Cyclocybe aegerita (Black poplar mushroom).